The following is a 196-amino-acid chain: ATP-dependent Clp protease proteolytic subunit (196 aa).

Catalysis depends on S98, which acts as the Nucleophile. H123 is an active-site residue.

This sequence belongs to the peptidase S14 family. As to quaternary structure, fourteen ClpP subunits assemble into 2 heptameric rings which stack back to back to give a disk-like structure with a central cavity, resembling the structure of eukaryotic proteasomes.

It is found in the cytoplasm. It catalyses the reaction Hydrolysis of proteins to small peptides in the presence of ATP and magnesium. alpha-casein is the usual test substrate. In the absence of ATP, only oligopeptides shorter than five residues are hydrolyzed (such as succinyl-Leu-Tyr-|-NHMec, and Leu-Tyr-Leu-|-Tyr-Trp, in which cleavage of the -Tyr-|-Leu- and -Tyr-|-Trp bonds also occurs).. Functionally, cleaves peptides in various proteins in a process that requires ATP hydrolysis. Has a chymotrypsin-like activity. Plays a major role in the degradation of misfolded proteins. This chain is ATP-dependent Clp protease proteolytic subunit, found in Anoxybacillus flavithermus (strain DSM 21510 / WK1).